Reading from the N-terminus, the 957-residue chain is ERC protein 2 (957 aa).

A compositionally biased stretch (polar residues) spans 1-13; it reads MYGSARTITNLEG. The segment at 1–44 is disordered; the sequence is MYGSARTITNLEGSPSRSPRLPRSPRLGHRRTSSGGGGGTGKTL. Positions 14 to 25 are enriched in low complexity; the sequence is SPSRSPRLPRSP. Serine 65 and serine 666 each carry phosphoserine. A coiled-coil region spans residues 140–917; it reads RQVRDSTMLD…RMKLMADNYD (778 aa). A disordered region spans residues 918–957; sequence DDHHHYHHHHHHHHHRSPGRSQHSNHRPSPDQDDEEGIWA. The span at 922–943 shows a compositional bias: basic residues; sequence HYHHHHHHHHHRSPGRSQHSNH. Acidic residues predominate over residues 948-957; the sequence is DQDDEEGIWA.

As to quaternary structure, interacts with BSN, ERC1, PPFIA1, PPFIA2, PPFIA3 and PPFIA4. Interacts through its C-terminus with the PDZ domain of RIMS1. Part of a complex consisting of ERC2, RIMS1 and UNC13A.

The protein resides in the cytoplasm. It is found in the synapse. The protein localises to the presynaptic active zone. It localises to the cytoskeleton. In terms of biological role, thought to be involved in the organization of the cytomatrix at the nerve terminals active zone (CAZ) which regulates neurotransmitter release. Seems to act together with BSN. May recruit liprin-alpha proteins to the CAZ. The sequence is that of ERC protein 2 (ERC2) from Homo sapiens (Human).